A 397-amino-acid chain; its full sequence is Argininosuccinate synthase (397 aa).

9 to 17 (AYSGGLDTT) provides a ligand contact to ATP. Tyr87 contacts L-citrulline. Gly117 provides a ligand contact to ATP. 3 residues coordinate L-aspartate: Thr119, Asn123, and Asp124. Residue Asn123 participates in L-citrulline binding. The L-citrulline site is built by Arg127, Ser174, Ser183, Glu259, and Tyr271.

This sequence belongs to the argininosuccinate synthase family. Type 1 subfamily. As to quaternary structure, homotetramer.

It localises to the cytoplasm. The catalysed reaction is L-citrulline + L-aspartate + ATP = 2-(N(omega)-L-arginino)succinate + AMP + diphosphate + H(+). The protein operates within amino-acid biosynthesis; L-arginine biosynthesis; L-arginine from L-ornithine and carbamoyl phosphate: step 2/3. This chain is Argininosuccinate synthase, found in Pyrobaculum aerophilum (strain ATCC 51768 / DSM 7523 / JCM 9630 / CIP 104966 / NBRC 100827 / IM2).